Consider the following 31-residue polypeptide: Hemocyanin subunit 1 (31 aa).

It belongs to the tyrosinase family. Hemocyanin subfamily. Hemolymph.

Its subcellular location is the secreted. The protein localises to the extracellular space. Its function is as follows. Hemocyanins are copper-containing oxygen carriers occurring freely dissolved in the hemolymph of many mollusks and arthropods. This is Hemocyanin subunit 1 from Homarus americanus (American lobster).